We begin with the raw amino-acid sequence, 1610 residues long: Adenylate cyclase type 10 (1610 aa).

Guanylate cyclase domains are found at residues 42–179 and 293–418; these read VLMF…RLAQ and TIVF…ARMM. Mg(2+)-binding residues include aspartate 47 and isoleucine 48. Residue 47-52 coordinates ATP; that stretch reads DISGFT. Hydrogencarbonate is bound at residue lysine 95. Residue aspartate 99 participates in Mg(2+) binding. Residues aspartate 99 and lysine 144 each contribute to the ATP site. Positions 167, 176, and 337 each coordinate hydrogencarbonate. Residues valine 406 and 412–416 each bind ATP; that span reads NLAAR.

This sequence belongs to the adenylyl cyclase class-4/guanylyl cyclase family. Mg(2+) serves as cofactor. Requires Mn(2+) as cofactor. Post-translationally, cleavage may occur to generate the active 48 kDa form. Detected in airway epithelial cells and testis (at protein level). Weakly expressed in multiple tissues. Expressed in brain, heart, kidney, liver, lung, pancreas, peripheral blood leukocytes, placenta, skeletal muscle, stomach, thymus, airway epithelial cells, duodenum, jejunum and ileum. Very low level of expression in bone.

It is found in the cell membrane. It localises to the cytoplasm. Its subcellular location is the cytoskeleton. The protein resides in the perinuclear region. The protein localises to the nucleus. It is found in the cell projection. It localises to the cilium. Its subcellular location is the mitochondrion. It carries out the reaction ATP = 3',5'-cyclic AMP + diphosphate. Its activity is regulated as follows. Activated by manganese or magnesium ions. In the presence of magnesium ions, the enzyme is activated by bicarbonate. In the presence of manganese ions, the enzyme is inhibited by bicarbonate. In the absence of magnesium and bicarbonate, the enzyme is weakly activated by calcium. Calcium mildly increases the enzyme activity, also in the presence of magnesium ions. Catalyzes the formation of the signaling molecule cAMP. May function as sensor that mediates responses to changes in cellular bicarbonate and CO(2) levels. Has a critical role in mammalian spermatogenesis by producing the cAMP which regulates cAMP-responsive nuclear factors indispensable for sperm maturation in the epididymis. Induces capacitation, the maturational process that sperm undergo prior to fertilization. Involved in ciliary beat regulation. This is Adenylate cyclase type 10 (ADCY10) from Homo sapiens (Human).